We begin with the raw amino-acid sequence, 434 residues long: UDP-N-acetylmuramoyl-L-alanyl-D-glutamate--2,6-diaminopimelate ligase (434 aa).

UDP-N-acetyl-alpha-D-muramoyl-L-alanyl-D-glutamate is bound at residue Ser17. ATP is bound at residue 68 to 74; the sequence is GTNGKTT. UDP-N-acetyl-alpha-D-muramoyl-L-alanyl-D-glutamate-binding positions include 111 to 112, Ser138, Gln144, and Arg146; that span reads TT. Lys178 is modified (N6-carboxylysine). Meso-2,6-diaminopimelate contacts are provided by residues Arg326, 350 to 353, Gly401, and Glu405; that span reads DNPR. Residues 350-353 carry the Meso-diaminopimelate recognition motif motif; the sequence is DNPR.

It belongs to the MurCDEF family. MurE subfamily. Mg(2+) serves as cofactor. Post-translationally, carboxylation is probably crucial for Mg(2+) binding and, consequently, for the gamma-phosphate positioning of ATP.

It localises to the cytoplasm. The catalysed reaction is UDP-N-acetyl-alpha-D-muramoyl-L-alanyl-D-glutamate + meso-2,6-diaminopimelate + ATP = UDP-N-acetyl-alpha-D-muramoyl-L-alanyl-gamma-D-glutamyl-meso-2,6-diaminopimelate + ADP + phosphate + H(+). It participates in cell wall biogenesis; peptidoglycan biosynthesis. Its function is as follows. Catalyzes the addition of meso-diaminopimelic acid to the nucleotide precursor UDP-N-acetylmuramoyl-L-alanyl-D-glutamate (UMAG) in the biosynthesis of bacterial cell-wall peptidoglycan. This is UDP-N-acetylmuramoyl-L-alanyl-D-glutamate--2,6-diaminopimelate ligase from Wolinella succinogenes (strain ATCC 29543 / DSM 1740 / CCUG 13145 / JCM 31913 / LMG 7466 / NCTC 11488 / FDC 602W) (Vibrio succinogenes).